We begin with the raw amino-acid sequence, 171 residues long: Small ribosomal subunit protein uS5 (171 aa).

Positions leucine 16–isoleucine 79 constitute an S5 DRBM domain.

Belongs to the universal ribosomal protein uS5 family. Part of the 30S ribosomal subunit. Contacts proteins S4 and S8.

Its function is as follows. With S4 and S12 plays an important role in translational accuracy. Functionally, located at the back of the 30S subunit body where it stabilizes the conformation of the head with respect to the body. This chain is Small ribosomal subunit protein uS5, found in Thiobacillus denitrificans (strain ATCC 25259 / T1).